The following is a 380-amino-acid chain: Dynactin subunit 2 (380 aa).

The tract at residues 1-40 (MADPKFQNLPGIAYDQPDVYETPDDPETDTSDYYEEEPEN) is disordered. Acidic residues predominate over residues 21–40 (ETPDDPETDTSDYYEEEPEN). Coiled coils occupy residues 100 to 135 (VQKC…QSYD) and 353 to 377 (ETFA…TAIS).

It belongs to the dynactin subunit 2 family. Subunit of dynactin, a multiprotein complex associated with dynein.

The protein localises to the cytoplasm. It is found in the cytoskeleton. It localises to the membrane. Modulates cytoplasmic dynein binding to an organelle, and plays a role in prometaphase chromosome alignment and spindle organization during mitosis. May play a role in synapse formation during brain development. This is Dynactin subunit 2 from Drosophila pseudoobscura pseudoobscura (Fruit fly).